The primary structure comprises 355 residues: MAAMATTASSLLKTSFAGARLPAAARNPTVSVAPRTGGAICNSISSSSSTPPYDLNAIRFSPIKESIVSREMTRRYMTDMITYADTDVVVVGAGSAGLSCAYELSKDPSVSVAVIEQSVSPGGGAWLGGQLFSAMVVRKPAHLFLDELGVAYDEQEDYVVIKHAALFTSTVMSRLLARPNVKLFNAVAVEDLIVKEGRVGGVVTNWALVSMNHDTQSCMDPNVMESRVVVSSCGHDGPFGATGVKRLQDIGMIDAVPGMRALDMNTAEDEIVRLTREVVPGMIVTGMEVAEIDGAPRMGPTFGAMMISGQKAAHLALKALGRPNAIDGTIKKAAAAAAHPELILASKDDGEIVDA.

The transit peptide at 1–42 (MAAMATTASSLLKTSFAGARLPAAARNPTVSVAPRTGGAICN) directs the protein to the chloroplast. Substrate is bound by residues Ala-96, 116–117 (EQ), Gly-124, and Val-189. At Cys-218 the chain carries 2,3-didehydroalanine (Cys). Residues Asp-220, His-235, Met-287, and 297 to 299 (RMG) contribute to the substrate site.

Belongs to the THI4 family. Homooctamer. Fe cation is required as a cofactor. In terms of processing, during the catalytic reaction, a sulfide is transferred from Cys-218 to a reaction intermediate, generating a dehydroalanine residue.

The protein resides in the plastid. The protein localises to the chloroplast. It carries out the reaction [ADP-thiazole synthase]-L-cysteine + glycine + NAD(+) = [ADP-thiazole synthase]-dehydroalanine + ADP-5-ethyl-4-methylthiazole-2-carboxylate + nicotinamide + 3 H2O + 2 H(+). Involved in biosynthesis of the thiamine precursor thiazole. Catalyzes the conversion of NAD and glycine to adenosine diphosphate 5-(2-hydroxyethyl)-4-methylthiazole-2-carboxylic acid (ADT), an adenylated thiazole intermediate. The reaction includes an iron-dependent sulfide transfer from a conserved cysteine residue of the protein to a thiazole intermediate. The enzyme can only undergo a single turnover, which suggests it is a suicide enzyme. May have additional roles in adaptation to various stress conditions and in DNA damage tolerance. Required fot thiamine accumulation and disease resistance toward the bacterial pathogen Xanthomonas oryzae pv oryzae (Xoo) and the fungal pathogen Magnaporthe oryzae. During infection by Xoo, functions positively in the defense pathway initiated by the resistance genes XA3 and XA26 by promoting thiamine synthesis. May function upstream of the defense-related proteins peroxidases, phenylalanine ammonia-lyases and pathogenesis-related proteins. In terms of biological role, (Microbial infection) During infection by Xanthomonas oryzae pv oryzae (Xoo), THI1 interacts with the type III effector virulence factor xadA from Xoo, which is an adhesin-like outer membrane protein. This probably attenuates the function of THI1 in defense response. This chain is Thiamine thiazole synthase, chloroplastic, found in Oryza sativa subsp. japonica (Rice).